A 300-amino-acid polypeptide reads, in one-letter code: Geranylgeranyl diphosphate synthase (300 aa).

Lysine 50, arginine 53, and histidine 82 together coordinate isopentenyl diphosphate. Residues aspartate 89 and aspartate 95 each coordinate Mg(2+). Arginine 100 contacts (2E,6E)-farnesyl diphosphate. Arginine 101 serves as a coordination point for isopentenyl diphosphate. Positions 186, 187, and 224 each coordinate (2E,6E)-farnesyl diphosphate.

It belongs to the FPP/GGPP synthase family. The cofactor is Mg(2+).

The protein localises to the plastid. It localises to the cyanelle. It catalyses the reaction isopentenyl diphosphate + (2E,6E)-farnesyl diphosphate = (2E,6E,10E)-geranylgeranyl diphosphate + diphosphate. It participates in isoprenoid biosynthesis; geranylgeranyl diphosphate biosynthesis; geranylgeranyl diphosphate from farnesyl diphosphate and isopentenyl diphosphate: step 1/1. Its function is as follows. Catalyzes the condensation of farnesyl diphosphate (FPP) and isopentenyl diphosphate (IPP) to yield geranylgeranyl diphosphate (GGPP) needed for biosynthesis of carotenoids and diterpenes. The polypeptide is Geranylgeranyl diphosphate synthase (crtE) (Cyanophora paradoxa).